The chain runs to 204 residues: UPF0637 protein LMHCC_1566 (204 aa).

Belongs to the UPF0637 family.

The protein is UPF0637 protein LMHCC_1566 of Listeria monocytogenes serotype 4a (strain HCC23).